Here is a 258-residue protein sequence, read N- to C-terminus: Imidazole glycerol phosphate synthase subunit HisF (258 aa).

Active-site residues include aspartate 11 and aspartate 130.

Belongs to the HisA/HisF family. In terms of assembly, heterodimer of HisH and HisF.

Its subcellular location is the cytoplasm. It catalyses the reaction 5-[(5-phospho-1-deoxy-D-ribulos-1-ylimino)methylamino]-1-(5-phospho-beta-D-ribosyl)imidazole-4-carboxamide + L-glutamine = D-erythro-1-(imidazol-4-yl)glycerol 3-phosphate + 5-amino-1-(5-phospho-beta-D-ribosyl)imidazole-4-carboxamide + L-glutamate + H(+). Its pathway is amino-acid biosynthesis; L-histidine biosynthesis; L-histidine from 5-phospho-alpha-D-ribose 1-diphosphate: step 5/9. IGPS catalyzes the conversion of PRFAR and glutamine to IGP, AICAR and glutamate. The HisF subunit catalyzes the cyclization activity that produces IGP and AICAR from PRFAR using the ammonia provided by the HisH subunit. This Methylobacterium sp. (strain 4-46) protein is Imidazole glycerol phosphate synthase subunit HisF.